Reading from the N-terminus, the 299-residue chain is UTP--glucose-1-phosphate uridylyltransferase 1 (299 aa).

This sequence belongs to the UDPGP type 2 family.

It carries out the reaction alpha-D-glucose 1-phosphate + UTP + H(+) = UDP-alpha-D-glucose + diphosphate. The protein operates within carbohydrate metabolism; nucleotide-sugar metabolism. The sequence is that of UTP--glucose-1-phosphate uridylyltransferase 1 (hasC1) from Streptococcus pyogenes serotype M6 (strain ATCC BAA-946 / MGAS10394).